The chain runs to 418 residues: Protein FAM53A (418 aa).

2 disordered regions span residues 198-236 and 248-269; these read TSPVPRPSSASSGFVDSSEGSTSSSTRWNSGGPCDFNPR and ETGNLLPSANSTPTSTPELSRR. The segment covering 205 to 229 has biased composition (low complexity); the sequence is SSASSGFVDSSEGSTSSSTRWNSGG. A compositionally biased stretch (polar residues) spans 248 to 265; that stretch reads ETGNLLPSANSTPTSTPE. Residues 285–293 carry the Nuclear localization signal motif; that stretch reads KKSRLKRRR.

It belongs to the FAM53 family.

The protein resides in the nucleus. Its function is as follows. May play an important role in neural development; the dorsomedial roof of the third ventricle. This is Protein FAM53A from Gallus gallus (Chicken).